Here is a 129-residue protein sequence, read N- to C-terminus: uncharacterized protein (129 aa).

A run of 2 helical transmembrane segments spans residues Phe-4–Ile-24 and Val-37–Ile-57.

It to B.burgdorferi BBF20.

Its subcellular location is the cell membrane. This is an uncharacterized protein from Borreliella burgdorferi (strain ATCC 35210 / DSM 4680 / CIP 102532 / B31) (Borrelia burgdorferi).